Here is a 61-residue protein sequence, read N- to C-terminus: Insect toxin BsIT1 (61 aa).

The region spanning 1–61 (DGYILMRNGC…KHLNYHKKTC (61 aa)) is the LCN-type CS-alpha/beta domain. Cystine bridges form between cysteine 10/cysteine 61, cysteine 14/cysteine 35, cysteine 21/cysteine 42, and cysteine 25/cysteine 44.

The protein belongs to the long (4 C-C) scorpion toxin superfamily. Sodium channel inhibitor family. Beta subfamily. In terms of tissue distribution, expressed by the venom gland.

It localises to the secreted. In terms of biological role, depressant insect beta-toxins cause a transient contraction paralysis followed by a slow flaccid paralysis. They bind voltage-independently at site-4 of sodium channels (Nav) and shift the voltage of activation toward more negative potentials thereby affecting sodium channel activation and promoting spontaneous and repetitive firing. This toxin is active only on insects and causes a transient contraction paralysis followed by a slow flaccid paralysis. The polypeptide is Insect toxin BsIT1 (Hottentotta tamulus sindicus (Scorpion)).